The primary structure comprises 95 residues: Citrate lyase acyl carrier protein (95 aa).

Ser-14 is modified (O-(phosphoribosyl dephospho-coenzyme A)serine).

This sequence belongs to the CitD family. Oligomer with a subunit composition of (alpha,beta,gamma)6.

The protein resides in the cytoplasm. Its function is as follows. Covalent carrier of the coenzyme of citrate lyase. This is Citrate lyase acyl carrier protein from Haemophilus influenzae (strain PittGG).